The chain runs to 349 residues: Phosphoribosylformylglycinamidine cyclo-ligase (349 aa).

Belongs to the AIR synthase family.

Its subcellular location is the cytoplasm. It catalyses the reaction 2-formamido-N(1)-(5-O-phospho-beta-D-ribosyl)acetamidine + ATP = 5-amino-1-(5-phospho-beta-D-ribosyl)imidazole + ADP + phosphate + H(+). It functions in the pathway purine metabolism; IMP biosynthesis via de novo pathway; 5-amino-1-(5-phospho-D-ribosyl)imidazole from N(2)-formyl-N(1)-(5-phospho-D-ribosyl)glycinamide: step 2/2. The protein is Phosphoribosylformylglycinamidine cyclo-ligase of Bordetella parapertussis (strain 12822 / ATCC BAA-587 / NCTC 13253).